Reading from the N-terminus, the 386-residue chain is ATP synthase subunit a (386 aa).

A run of 4 helical transmembrane segments spans residues 150 to 170, 243 to 263, 270 to 290, and 310 to 330; these read FTNE…LFFV, HFLI…IVGF, FFSF…LVLL, and MMAG…MLFL.

This sequence belongs to the ATPase A chain family. F-type ATPases have 2 components, CF(1) - the catalytic core - and CF(0) - the membrane proton channel. CF(1) has five subunits: alpha(3), beta(3), gamma(1), delta(1), epsilon(1). CF(0) has three main subunits: a, b and c.

The protein localises to the mitochondrion inner membrane. Functionally, mitochondrial membrane ATP synthase (F(1)F(0) ATP synthase or Complex V) produces ATP from ADP in the presence of a proton gradient across the membrane which is generated by electron transport complexes of the respiratory chain. F-type ATPases consist of two structural domains, F(1) - containing the extramembraneous catalytic core and F(0) - containing the membrane proton channel, linked together by a central stalk and a peripheral stalk. During catalysis, ATP synthesis in the catalytic domain of F(1) is coupled via a rotary mechanism of the central stalk subunits to proton translocation. Key component of the proton channel; it may play a direct role in the translocation of protons across the membrane. This is ATP synthase subunit a (ATP6) from Triticum aestivum (Wheat).